We begin with the raw amino-acid sequence, 144 residues long: UPF0735 ACT domain-containing protein NT01CX_1681 (144 aa).

The ACT domain maps to 68–143 (TIGFLLSHKA…NVVKVSLIAM (76 aa)).

Belongs to the UPF0735 family.

The protein is UPF0735 ACT domain-containing protein NT01CX_1681 of Clostridium novyi (strain NT).